The sequence spans 82 residues: Small ribosomal subunit protein uS17 (82 aa).

This sequence belongs to the universal ribosomal protein uS17 family. As to quaternary structure, part of the 30S ribosomal subunit.

Its function is as follows. One of the primary rRNA binding proteins, it binds specifically to the 5'-end of 16S ribosomal RNA. The sequence is that of Small ribosomal subunit protein uS17 from Shewanella sp. (strain MR-7).